The sequence spans 81 residues: MESLGATVKKPGSTVKNKTGSWRTFKPVLDKDKCIDCDNCILFCPEGCINREHEIDYDYCKGCGICAEKCPVKAIKMEREK.

4Fe-4S ferredoxin-type domains follow at residues 25–50 (FKPV…GCIN) and 51–80 (REHE…MERE). Cys34, Cys37, Cys40, Cys44, Cys60, Cys63, Cys66, and Cys70 together coordinate [4Fe-4S] cluster.

As to quaternary structure, heterotetramer of one alpha, one beta, one delta and one gamma chain. [4Fe-4S] cluster serves as cofactor.

The polypeptide is Pyruvate synthase subunit PorD (porD) (Methanothermobacter thermautotrophicus (strain ATCC 29096 / DSM 1053 / JCM 10044 / NBRC 100330 / Delta H) (Methanobacterium thermoautotrophicum)).